Consider the following 325-residue polypeptide: Coiled-coil domain-containing protein 130 homolog (325 aa).

A coiled-coil region spans residues 156-262; the sequence is LKLENKKLDI…KLKRELIKNE (107 aa).

It belongs to the CWC16 family.

This is Coiled-coil domain-containing protein 130 homolog from Dictyostelium discoideum (Social amoeba).